Consider the following 430-residue polypeptide: Enolase (430 aa).

Q165 provides a ligand contact to (2R)-2-phosphoglycerate. E207 acts as the Proton donor in catalysis. Mg(2+) contacts are provided by D244, E287, and D314. Residues K339, R368, S369, and K390 each contribute to the (2R)-2-phosphoglycerate site. The active-site Proton acceptor is K339.

It belongs to the enolase family. Component of the RNA degradosome, a multiprotein complex involved in RNA processing and mRNA degradation. Requires Mg(2+) as cofactor.

It is found in the cytoplasm. It localises to the secreted. Its subcellular location is the cell surface. The catalysed reaction is (2R)-2-phosphoglycerate = phosphoenolpyruvate + H2O. The protein operates within carbohydrate degradation; glycolysis; pyruvate from D-glyceraldehyde 3-phosphate: step 4/5. Functionally, catalyzes the reversible conversion of 2-phosphoglycerate (2-PG) into phosphoenolpyruvate (PEP). It is essential for the degradation of carbohydrates via glycolysis. In Xylella fastidiosa (strain 9a5c), this protein is Enolase.